Reading from the N-terminus, the 884-residue chain is Valine--tRNA ligase (884 aa).

Residues 46 to 56 (PNVTGKLHLGH) carry the 'HIGH' region motif. The 'KMSKS' region signature appears at 520–524 (KMSKS). Lys-523 is an ATP binding site. Residues 809–844 (LADLLNVEEELARLEKELAKWQKELNMVGKKLSNER) are a coiled coil.

It belongs to the class-I aminoacyl-tRNA synthetase family. ValS type 1 subfamily. Monomer.

The protein localises to the cytoplasm. The enzyme catalyses tRNA(Val) + L-valine + ATP = L-valyl-tRNA(Val) + AMP + diphosphate. Catalyzes the attachment of valine to tRNA(Val). As ValRS can inadvertently accommodate and process structurally similar amino acids such as threonine, to avoid such errors, it has a 'posttransfer' editing activity that hydrolyzes mischarged Thr-tRNA(Val) in a tRNA-dependent manner. In Streptococcus agalactiae serotype III (strain NEM316), this protein is Valine--tRNA ligase.